Consider the following 280-residue polypeptide: Urease accessory protein UreD 1 (280 aa).

The protein belongs to the UreD family. In terms of assembly, ureD, UreF and UreG form a complex that acts as a GTP-hydrolysis-dependent molecular chaperone, activating the urease apoprotein by helping to assemble the nickel containing metallocenter of UreC. The UreE protein probably delivers the nickel.

It is found in the cytoplasm. Required for maturation of urease via the functional incorporation of the urease nickel metallocenter. The polypeptide is Urease accessory protein UreD 1 (Brucella abortus biovar 1 (strain 9-941)).